Consider the following 102-residue polypeptide: Cytochrome c oxidase subunit 6a, mitochondrial (102 aa).

The N-terminal 36 residues, 1-36 (MATAIVRSALSRAVTRAAPKTSVAPKRNFSSSAGHD), are a transit peptide targeting the mitochondrion.

The protein belongs to the cytochrome c oxidase subunit 6A (TC 3.D.4.11) family.

The protein resides in the mitochondrion inner membrane. This protein is one of the nuclear-coded polypeptide chains of cytochrome c oxidase, the terminal oxidase in mitochondrial electron transport. The protein is Cytochrome c oxidase subunit 6a, mitochondrial (COX6A) of Arabidopsis thaliana (Mouse-ear cress).